Consider the following 446-residue polypeptide: Probable glucuronosyltransferase Os04g0650300 (446 aa).

At 1-30 (MKLPLLRPLWPMLSPAAGSPDSPPEPSKPS) the chain is on the cytoplasmic side. The chain crosses the membrane as a helical; Signal-anchor for type II membrane protein span at residues 31 to 51 (LPAAWLLLHALFCATSMAVGF). Over 52-446 (RFSRLIVYLL…TTLLNTEGQH (395 aa)) the chain is Lumenal. Asn-87 is a glycosylation site (N-linked (GlcNAc...) asparagine). A disordered region spans residues 425–446 (QQDAKPETPLKRTTLLNTEGQH).

It belongs to the glycosyltransferase 43 family.

It localises to the golgi apparatus membrane. Functionally, involved in the synthesis of glucuronoxylan hemicellulose in secondary cell walls. The protein is Probable glucuronosyltransferase Os04g0650300 of Oryza sativa subsp. japonica (Rice).